The primary structure comprises 610 residues: Phosphomethylpyrimidine synthase (610 aa).

Residues asparagine 216, methionine 245, tyrosine 274, histidine 310, 330-332 (SRG), 371-374 (DGLR), and glutamate 410 each bind substrate. Histidine 414 serves as a coordination point for Zn(2+). A substrate-binding site is contributed by tyrosine 437. Zn(2+) is bound at residue histidine 478. Cysteine 558, cysteine 561, and cysteine 566 together coordinate [4Fe-4S] cluster.

Belongs to the ThiC family. As to quaternary structure, homodimer. It depends on [4Fe-4S] cluster as a cofactor.

It catalyses the reaction 5-amino-1-(5-phospho-beta-D-ribosyl)imidazole + S-adenosyl-L-methionine = 4-amino-2-methyl-5-(phosphooxymethyl)pyrimidine + CO + 5'-deoxyadenosine + formate + L-methionine + 3 H(+). It participates in cofactor biosynthesis; thiamine diphosphate biosynthesis. Functionally, catalyzes the synthesis of the hydroxymethylpyrimidine phosphate (HMP-P) moiety of thiamine from aminoimidazole ribotide (AIR) in a radical S-adenosyl-L-methionine (SAM)-dependent reaction. The sequence is that of Phosphomethylpyrimidine synthase from Rhizobium etli (strain ATCC 51251 / DSM 11541 / JCM 21823 / NBRC 15573 / CFN 42).